The sequence spans 419 residues: Serine--tRNA ligase (419 aa).

226–228 (TSE) serves as a coordination point for L-serine. Residues 257–259 (RRE) and valine 273 each bind ATP. Residue glutamate 280 participates in L-serine binding. 344 to 347 (ELTS) is a binding site for ATP. Position 379 (threonine 379) interacts with L-serine.

This sequence belongs to the class-II aminoacyl-tRNA synthetase family. Type-1 seryl-tRNA synthetase subfamily. Homodimer. The tRNA molecule binds across the dimer.

Its subcellular location is the cytoplasm. It catalyses the reaction tRNA(Ser) + L-serine + ATP = L-seryl-tRNA(Ser) + AMP + diphosphate + H(+). The enzyme catalyses tRNA(Sec) + L-serine + ATP = L-seryl-tRNA(Sec) + AMP + diphosphate + H(+). It functions in the pathway aminoacyl-tRNA biosynthesis; selenocysteinyl-tRNA(Sec) biosynthesis; L-seryl-tRNA(Sec) from L-serine and tRNA(Sec): step 1/1. In terms of biological role, catalyzes the attachment of serine to tRNA(Ser). Is also able to aminoacylate tRNA(Sec) with serine, to form the misacylated tRNA L-seryl-tRNA(Sec), which will be further converted into selenocysteinyl-tRNA(Sec). In Corynebacterium efficiens (strain DSM 44549 / YS-314 / AJ 12310 / JCM 11189 / NBRC 100395), this protein is Serine--tRNA ligase.